The following is a 266-amino-acid chain: Cytosolic Fe-S cluster assembly factor Nubp2 homolog (266 aa).

Glycine 14–serine 21 is an ATP binding site. Residues cysteine 188 and cysteine 191 each coordinate [4Fe-4S] cluster.

The protein belongs to the Mrp/NBP35 ATP-binding proteins family. Nubp2/CFD1 subfamily. As to quaternary structure, heterotetramer of 2 Nubp1 and 2 Nubp2 chains. The cofactor is [4Fe-4S] cluster.

The protein resides in the cytoplasm. Functionally, component of the cytosolic iron-sulfur (Fe/S) protein assembly (CIA) machinery. Required for maturation of extramitochondrial Fe-S proteins. The Nubp1-Nubp2 heterotetramer forms a Fe-S scaffold complex, mediating the de novo assembly of an Fe-S cluster and its transfer to target apoproteins. The sequence is that of Cytosolic Fe-S cluster assembly factor Nubp2 homolog from Drosophila virilis (Fruit fly).